Reading from the N-terminus, the 271-residue chain is MTQVQKIHPTAVIDPQAELAPDVEVGAFTVIGPNVRIDSGTRIGHHTVVEGYTTLGRDNQIGHFASVGGRPQDMKYRDEPTRLIVGDRNTIREFTTIHTGTAQDVGITSIGDDNWIMAYVHIAHDCRIGNHTVFSSNAQIAGHVEVGDWAILGGMSGVHQFVRIGAHAMLGGASALVQDVPPFVIAASDKGGNKAAPHGVNVVGLQRRGFSAEQIAGLRQAYKLLYKSDLSFDQAQAEIAAQVAQTEDAPSREALRTFADFIAATKRGIVR.

It belongs to the transferase hexapeptide repeat family. LpxA subfamily. As to quaternary structure, homotrimer.

Its subcellular location is the cytoplasm. It catalyses the reaction a (3R)-hydroxyacyl-[ACP] + UDP-N-acetyl-alpha-D-glucosamine = a UDP-3-O-[(3R)-3-hydroxyacyl]-N-acetyl-alpha-D-glucosamine + holo-[ACP]. It functions in the pathway glycolipid biosynthesis; lipid IV(A) biosynthesis; lipid IV(A) from (3R)-3-hydroxytetradecanoyl-[acyl-carrier-protein] and UDP-N-acetyl-alpha-D-glucosamine: step 1/6. Functionally, involved in the biosynthesis of lipid A, a phosphorylated glycolipid that anchors the lipopolysaccharide to the outer membrane of the cell. In Ralstonia nicotianae (strain ATCC BAA-1114 / GMI1000) (Ralstonia solanacearum), this protein is Acyl-[acyl-carrier-protein]--UDP-N-acetylglucosamine O-acyltransferase.